The sequence spans 1790 residues: Atrochrysone carboxylic acid synthase (1790 aa).

The interval 27-265 (RDLQDLFRQA…ALPVYGGLCH (239 aa)) is N-terminal acylcarrier protein transacylase domain (SAT). The region spanning 399 to 833 (QSKLAIVGMS…GGNTTMILED (435 aa)) is the Ketosynthase family 3 (KS3) domain. Residues Cys572, His708, and His751 each act as for beta-ketoacyl synthase activity in the active site. Residues 934 to 1254 (FSFTGQGASH…IAQLYTVGVD (321 aa)) form a malonyl-CoA:ACP transacylase (MAT) domain region. Positions 1323–1475 (QQIVEQVFDT…SLTHLVRDRI (153 aa)) are N-terminal hotdog fold. The PKS/mFAS DH domain occupies 1323-1634 (QQIVEQVFDT…FHRYRRILLE (312 aa)). His1357 serves as the catalytic Proton acceptor; for dehydratase activity. The segment at 1357–1631 (HRMNDCGVAT…GIEFHRYRRI (275 aa)) is product template (PT) domain. Positions 1487 to 1634 (ANRLSHNMAY…FHRYRRILLE (148 aa)) are C-terminal hotdog fold. The active-site Proton donor; for dehydratase activity is the Asp1545. Residues 1644–1667 (NLDDTTETKDISSSTQHSVPVSRQ) form a disordered region. Over residues 1654–1664 (ISSSTQHSVPV) the composition is skewed to polar residues. Residues 1715–1789 (SSITNRAMQL…DLRNWLEETY (75 aa)) form the Carrier domain. Ser1749 is subject to O-(pantetheine 4'-phosphoryl)serine.

It carries out the reaction holo-[ACP] + 8 malonyl-CoA + 8 H(+) = atrochrysone carboxyl-[ACP] + 8 CO2 + 8 CoA + 2 H2O. Its pathway is pigment biosynthesis. Non-reducing polyketide synthase; part of the gene cluster that mediates the biosynthesis of the bianthraquinone cladofulvin, a conidial pigment not required for virulence but that plays a role in fitness and resistance to environmental stresses including UV light and low-temperature stress. The pathway begins with the synthesis of atrochrysone thioester by the polyketide synthase (PKS) claG. The atrochrysone carboxyl ACP thioesterase claF then breaks the thioester bond and releases the atrochrysone carboxylic acid from claG. This compound is decarboxylated by claH to yield emodin, which is further converted to chrysophanol hydroquinone by the reductase claC and the dehydratase claB. The cytochrome P450 monooxygenase claM then catalyzes the dimerization of nataloe-emodin to cladofulvin. The protein is Atrochrysone carboxylic acid synthase of Passalora fulva (Tomato leaf mold).